We begin with the raw amino-acid sequence, 171 residues long: Transcription antitermination protein NusB (171 aa).

Belongs to the NusB family.

Its function is as follows. Involved in transcription antitermination. Required for transcription of ribosomal RNA (rRNA) genes. Binds specifically to the boxA antiterminator sequence of the ribosomal RNA (rrn) operons. This Brucella melitensis biotype 1 (strain ATCC 23456 / CCUG 17765 / NCTC 10094 / 16M) protein is Transcription antitermination protein NusB.